A 314-amino-acid chain; its full sequence is 4-hydroxy-3-methylbut-2-enyl diphosphate reductase (314 aa).

Residue Cys-18 participates in [4Fe-4S] cluster binding. Residues His-47 and His-80 each coordinate (2E)-4-hydroxy-3-methylbut-2-enyl diphosphate. The dimethylallyl diphosphate site is built by His-47 and His-80. 2 residues coordinate isopentenyl diphosphate: His-47 and His-80. Position 102 (Cys-102) interacts with [4Fe-4S] cluster. His-130 serves as a coordination point for (2E)-4-hydroxy-3-methylbut-2-enyl diphosphate. His-130 provides a ligand contact to dimethylallyl diphosphate. His-130 is a binding site for isopentenyl diphosphate. The active-site Proton donor is Glu-132. A (2E)-4-hydroxy-3-methylbut-2-enyl diphosphate-binding site is contributed by Thr-171. Cys-201 serves as a coordination point for [4Fe-4S] cluster. Ser-229, Ser-230, Asn-231, and Ser-273 together coordinate (2E)-4-hydroxy-3-methylbut-2-enyl diphosphate. Ser-229, Ser-230, Asn-231, and Ser-273 together coordinate dimethylallyl diphosphate. Isopentenyl diphosphate is bound by residues Ser-229, Ser-230, Asn-231, and Ser-273.

The protein belongs to the IspH family. It depends on [4Fe-4S] cluster as a cofactor.

The catalysed reaction is isopentenyl diphosphate + 2 oxidized [2Fe-2S]-[ferredoxin] + H2O = (2E)-4-hydroxy-3-methylbut-2-enyl diphosphate + 2 reduced [2Fe-2S]-[ferredoxin] + 2 H(+). The enzyme catalyses dimethylallyl diphosphate + 2 oxidized [2Fe-2S]-[ferredoxin] + H2O = (2E)-4-hydroxy-3-methylbut-2-enyl diphosphate + 2 reduced [2Fe-2S]-[ferredoxin] + 2 H(+). Its pathway is isoprenoid biosynthesis; dimethylallyl diphosphate biosynthesis; dimethylallyl diphosphate from (2E)-4-hydroxy-3-methylbutenyl diphosphate: step 1/1. It participates in isoprenoid biosynthesis; isopentenyl diphosphate biosynthesis via DXP pathway; isopentenyl diphosphate from 1-deoxy-D-xylulose 5-phosphate: step 6/6. Functionally, catalyzes the conversion of 1-hydroxy-2-methyl-2-(E)-butenyl 4-diphosphate (HMBPP) into a mixture of isopentenyl diphosphate (IPP) and dimethylallyl diphosphate (DMAPP). Acts in the terminal step of the DOXP/MEP pathway for isoprenoid precursor biosynthesis. This Phenylobacterium zucineum (strain HLK1) protein is 4-hydroxy-3-methylbut-2-enyl diphosphate reductase.